The primary structure comprises 212 residues: Protein-L-isoaspartate O-methyltransferase (212 aa).

The active site involves Ser56.

The protein belongs to the methyltransferase superfamily. L-isoaspartyl/D-aspartyl protein methyltransferase family.

It localises to the cytoplasm. It carries out the reaction [protein]-L-isoaspartate + S-adenosyl-L-methionine = [protein]-L-isoaspartate alpha-methyl ester + S-adenosyl-L-homocysteine. Its function is as follows. Catalyzes the methyl esterification of L-isoaspartyl residues in peptides and proteins that result from spontaneous decomposition of normal L-aspartyl and L-asparaginyl residues. It plays a role in the repair and/or degradation of damaged proteins. The chain is Protein-L-isoaspartate O-methyltransferase from Myxococcus xanthus (strain DK1622).